A 593-amino-acid chain; its full sequence is Scarecrow-like protein 1 (593 aa).

Disordered stretches follow at residues 29 to 61 and 188 to 216; these read NPKL…PCLT and YQNE…SKEV. Residues 35–48 show a composition bias toward polar residues; it reads LNENGNNNGVSSAQ. Low complexity predominate over residues 202–211; the sequence is SSSADSNSHV. The 381-residue stretch at 213-593 folds into the GRAS domain; that stretch reads SKEVVSQATP…KSLIVASAWR (381 aa). Residues 220 to 280 are leucine repeat I (LRI); that stretch reads ATPKQILISC…AARMAASGKF (61 aa). Positions 299–364 are VHIID; that stretch reads MQVLFEVCPC…GKRPRLRLTG (66 aa). The short motif at 330-334 is the VHIID element; it reads VHIID. The interval 380-411 is leucine repeat II (LRII); that stretch reads IIGLRLEQLAEDNGVSFKFKAMPSKTSIVSPS. The tract at residues 421-515 is PFYRE; that stretch reads LIVNFAFQLH…RQCLARDIVN (95 aa). The interval 518–593 is SAW; it reads ACEGEERIER…KSLIVASAWR (76 aa).

The protein belongs to the GRAS family. In terms of tissue distribution, expressed in seedlings, roots, shoots, leaves, flowers and siliques.

It localises to the nucleus. In terms of biological role, probable transcription factor involved in plant development. The chain is Scarecrow-like protein 1 (SCL1) from Arabidopsis thaliana (Mouse-ear cress).